The chain runs to 378 residues: Chaperone protein DnaJ 2 (378 aa).

The J domain occupies 4–68; that stretch reads DYYGLLGVSR…EKRRIVDLGG (65 aa). The segment at 128–210 adopts a CR-type zinc-finger fold; it reads GVTKQVTVDT…CVGDGRVRAR (83 aa). Zn(2+) is bound by residues Cys-141, Cys-144, Cys-158, Cys-161, Cys-184, Cys-187, Cys-198, and Cys-201. CXXCXGXG motif repeat units follow at residues 141–148, 158–165, 184–191, and 198–205; these read CDRCQGKG, CDTCGGRG, CPTCRGVG, and CCQCVGDG.

The protein belongs to the DnaJ family. As to quaternary structure, homodimer. Zn(2+) is required as a cofactor.

It localises to the cytoplasm. Functionally, participates actively in the response to hyperosmotic and heat shock by preventing the aggregation of stress-denatured proteins and by disaggregating proteins, also in an autonomous, DnaK-independent fashion. Unfolded proteins bind initially to DnaJ; upon interaction with the DnaJ-bound protein, DnaK hydrolyzes its bound ATP, resulting in the formation of a stable complex. GrpE releases ADP from DnaK; ATP binding to DnaK triggers the release of the substrate protein, thus completing the reaction cycle. Several rounds of ATP-dependent interactions between DnaJ, DnaK and GrpE are required for fully efficient folding. Also involved, together with DnaK and GrpE, in the DNA replication of plasmids through activation of initiation proteins. This chain is Chaperone protein DnaJ 2, found in Mycobacterium leprae (strain TN).